The sequence spans 72 residues: Exodeoxyribonuclease 7 small subunit (72 aa).

Belongs to the XseB family. In terms of assembly, heterooligomer composed of large and small subunits.

It localises to the cytoplasm. It catalyses the reaction Exonucleolytic cleavage in either 5'- to 3'- or 3'- to 5'-direction to yield nucleoside 5'-phosphates.. Functionally, bidirectionally degrades single-stranded DNA into large acid-insoluble oligonucleotides, which are then degraded further into small acid-soluble oligonucleotides. This chain is Exodeoxyribonuclease 7 small subunit, found in Chlamydia trachomatis serovar L2 (strain ATCC VR-902B / DSM 19102 / 434/Bu).